Reading from the N-terminus, the 264-residue chain is GTP cyclohydrolase FolE2 (264 aa).

This sequence belongs to the GTP cyclohydrolase IV family.

The catalysed reaction is GTP + H2O = 7,8-dihydroneopterin 3'-triphosphate + formate + H(+). It participates in cofactor biosynthesis; 7,8-dihydroneopterin triphosphate biosynthesis; 7,8-dihydroneopterin triphosphate from GTP: step 1/1. Converts GTP to 7,8-dihydroneopterin triphosphate. This Akkermansia muciniphila (strain ATCC BAA-835 / DSM 22959 / JCM 33894 / BCRC 81048 / CCUG 64013 / CIP 107961 / Muc) protein is GTP cyclohydrolase FolE2.